The chain runs to 297 residues: Phosphatidylglycerol--prolipoprotein diacylglyceryl transferase (297 aa).

4 helical membrane passes run 20-40, 57-77, 105-125, and 133-153; these read FITI…GLFV, EILP…YVIF, AVWE…ISII, and INLK…QSIG. Position 154 (R154) interacts with a 1,2-diacyl-sn-glycero-3-phospho-(1'-sn-glycerol). Helical transmembrane passes span 193–213, 225–245, and 266–286; these read PTFL…IIIF, GFIS…IEGL, and AQFI…FLRL.

Belongs to the Lgt family.

The protein resides in the cell inner membrane. The enzyme catalyses L-cysteinyl-[prolipoprotein] + a 1,2-diacyl-sn-glycero-3-phospho-(1'-sn-glycerol) = an S-1,2-diacyl-sn-glyceryl-L-cysteinyl-[prolipoprotein] + sn-glycerol 1-phosphate + H(+). The protein operates within protein modification; lipoprotein biosynthesis (diacylglyceryl transfer). Catalyzes the transfer of the diacylglyceryl group from phosphatidylglycerol to the sulfhydryl group of the N-terminal cysteine of a prolipoprotein, the first step in the formation of mature lipoproteins. This is Phosphatidylglycerol--prolipoprotein diacylglyceryl transferase from Prochlorococcus marinus (strain MIT 9215).